The sequence spans 457 residues: COBRA-like protein 3 (457 aa).

An N-terminal signal peptide occupies residues 1–35; that stretch reads MAVGGAGSSRSVAPCCCCAVLLAAALLFSAPATTE. Asparagine 45, asparagine 170, asparagine 178, asparagine 217, asparagine 242, asparagine 258, asparagine 326, asparagine 341, and asparagine 361 each carry an N-linked (GlcNAc...) asparagine glycan. A lipid anchor (GPI-anchor amidated asparagine) is attached at asparagine 430. Residues 431–457 constitute a propeptide, removed in mature form; the sequence is ASPLTKQPLTLSVLVFSIVLATLLAYA. The helical transmembrane segment at 437–457 threads the bilayer; that stretch reads QPLTLSVLVFSIVLATLLAYA.

The protein belongs to the COBRA family.

The protein resides in the cell membrane. In terms of biological role, involved in determining the orientation of cell expansion, probably by playing an important role in cellulose deposition. May act by recruiting cellulose synthesizing complexes to discrete positions on the cell surface. The polypeptide is COBRA-like protein 3 (BC1L4) (Oryza sativa subsp. japonica (Rice)).